The chain runs to 388 residues: Fibrinogen- and Ig-binding protein (388 aa).

The signal sequence occupies residues 1-41 (MSKTNPNKLYSLRKLKTGTASVAVDLTVLGTGLANTTDVKA). D repeat units lie at residues 288–293 (EKLEAE), 294–299 (AKALKE), 302–307 (AKQAEE), and 309–314 (AKLKAD). The segment at 308–362 (LAKLKADKASGAQKPDTKPGNKEVPTRPSQTRTNTNKAPMAQTKRQLPSTGEETT) is disordered. Residues 322–332 (PDTKPGNKEVP) show a composition bias toward basic and acidic residues. The span at 334 to 362 (RPSQTRTNTNKAPMAQTKRQLPSTGEETT) shows a compositional bias: polar residues. The LPXTG sorting signal motif lies at 354–358 (LPSTG). Threonine 357 bears the Pentaglycyl murein peptidoglycan amidated threonine mark. The propeptide at 358 to 388 (GEETTNPFFTAAALTVIASAGVLALKRKEEN) is removed by sortase.

The protein resides in the secreted. The protein localises to the cell wall. Its function is as follows. Binds IgG molecules of the Ig1, Ig2 and Ig4 subclasses, and also binds fibrinogen. The chain is Fibrinogen- and Ig-binding protein (mrp4) from Streptococcus pyogenes.